A 206-amino-acid chain; its full sequence is Small ribosomal subunit protein uS4 (206 aa).

The segment covering 1 to 16 (MTKRQESKYKIDRRMG) has biased composition (basic and acidic residues). The tract at residues 1-46 (MTKRQESKYKIDRRMGENIWGRPKSPVNRREYGPGQHGQRRKGKLS) is disordered. The S4 RNA-binding domain occupies 94–154 (RRLDAVVYRA…EKSKQLAIVL (61 aa)).

The protein belongs to the universal ribosomal protein uS4 family. As to quaternary structure, part of the 30S ribosomal subunit. Contacts protein S5. The interaction surface between S4 and S5 is involved in control of translational fidelity.

In terms of biological role, one of the primary rRNA binding proteins, it binds directly to 16S rRNA where it nucleates assembly of the body of the 30S subunit. Functionally, with S5 and S12 plays an important role in translational accuracy. The sequence is that of Small ribosomal subunit protein uS4 from Parvibaculum lavamentivorans (strain DS-1 / DSM 13023 / NCIMB 13966).